Consider the following 219-residue polypeptide: Small ribosomal subunit protein uS3 (219 aa).

The KH type-2 domain occupies 38-106 (IREYIENRLK…RVHINIFEVK (69 aa)).

The protein belongs to the universal ribosomal protein uS3 family. As to quaternary structure, part of the 30S ribosomal subunit. Forms a tight complex with proteins S10 and S14.

Functionally, binds the lower part of the 30S subunit head. Binds mRNA in the 70S ribosome, positioning it for translation. The polypeptide is Small ribosomal subunit protein uS3 (Halalkalibacterium halodurans (strain ATCC BAA-125 / DSM 18197 / FERM 7344 / JCM 9153 / C-125) (Bacillus halodurans)).